Here is a 1343-residue protein sequence, read N- to C-terminus: Vascular endothelial growth factor receptor 2 (1343 aa).

Residues 1–19 form the signal peptide; that stretch reads MESRALLAVALWFCVETRA. The Extracellular segment spans residues 20–760; it reads ASVGLPGDSL…EGVQEKTNLE (741 aa). Residues Asn46, Asn96, Asn143, Asn158, and Asn245 are each glycosylated (N-linked (GlcNAc...) asparagine). Ig-like C2-type domains follow at residues 46–109, 141–207, 224–320, 328–414, 421–540, 547–654, and 663–749; these read NTTL…RDTD, NKNK…INDE, YDVV…KNKT, PFIA…HMVS, PQIG…RVIS, PEIT…LVKQ, and PMIT…TLFI. Cys53 and Cys103 are joined by a disulfide. A disulfide bridge links Cys150 with Cys200. Cys246 and Cys307 form a disulfide bridge. N-linked (GlcNAc...) asparagine glycans are attached at residues Asn318, Asn374, Asn395, Asn507, Asn576, Asn609, Asn615, Asn627, Asn671, Asn700, and Asn717. 2 disulfide bridges follow: Cys445–Cys526 and Cys567–Cys638. The cysteines at positions 684 and 733 are disulfide-linked. The chain crosses the membrane as a helical span at residues 761 to 781; sequence VIILVGTAVIAMFFWLLLVIL. Over 782 to 1343 the chain is Cytoplasmic; it reads VRTVKRANEG…SGTTLRSSPV (562 aa). A Phosphotyrosine modification is found at Tyr797. In terms of domain architecture, Protein kinase spans 830–1158; it reads LKLGKPLGRG…FSELVEHLGN (329 aa). Residues 836 to 844 and Lys864 contribute to the ATP site; that span reads LGRGAFGQV. The residue at position 947 (Tyr947) is a Phosphotyrosine; by autocatalysis. Phosphoserine is present on residues Ser978 and Ser980. Tyr992 is subject to Phosphotyrosine; by autocatalysis. Cys1020 and Cys1041 are oxidised to a cystine. Catalysis depends on Asp1024, which acts as the Proton acceptor. Tyr1050, Tyr1055, Tyr1171, and Tyr1210 each carry phosphotyrosine; by autocatalysis. 2 positions are modified to phosphoserine: Ser1227 and Ser1231. Position 1234 is a phosphothreonine (Thr1234). The tract at residues 1267-1314 is disordered; the sequence is TLEDRNKLSPSFGGMMPSKSRESVASEGSNQTSGYQSGYHSDDTDTTV. Polar residues predominate over residues 1292–1305; sequence SEGSNQTSGYQSGY. Phosphotyrosine; by autocatalysis is present on residues Tyr1301, Tyr1305, and Tyr1315.

Belongs to the protein kinase superfamily. Tyr protein kinase family. CSF-1/PDGF receptor subfamily. In terms of assembly, homodimer in the presence of bound dimeric VEGFA, VEGFC or VEGFD ligands; monomeric in the absence of bound ligands. Can also form heterodimers with FLT1/VEGFR1 and KDR/VEGFR2. Interacts (tyrosine phosphorylated) with LFYN, NCK1, PLCG1. Interacts (tyrosine-phosphorylated active form preferentially) with DAB2IP (via C2 domain and active form preferentially); the interaction occurs at the late phase of VEGFA response and inhibits KDR/VEGFR2 activity. Interacts with SHBSH2D2A/TSAD, GRB2, MYOF, CBL and PDCD6. Interacts (via C-terminus domain) with ERN1 (via kinase domain); the interaction is facilitated in a XBP1- and vascular endothelial growth factor (VEGF)-dependent manner in endothelial cells. Interacts (via juxtamembrane region) with chaperone PDCL3 (via thioredoxin fold region); the interaction leads to increased KDR/VEGFR2 abundance through inhibition of its ubiquitination and degradation. Interacts (tyrosine phosphorylated) with CCDC88A/GIV (via SH2-like region); binding requires autophosphorylation of the KDR/VEGFR2 C-terminal region. Interacts with isoform 2 of BSG. Interacts with SLC31A1; this interaction is induced upon VEGFA stimulation leading to SLC31A1 and KDR subsequent co-internalization to early endosomes, thereby activating KDR downstream signaling in endothelial cells. N-glycosylated. Post-translationally, ubiquitinated. Tyrosine phosphorylation of the receptor promotes its poly-ubiquitination, leading to its degradation via the proteasome or lysosomal proteases. In terms of processing, autophosphorylated on tyrosine residues upon ligand binding. Autophosphorylation occurs in trans, i.e. one subunit of the dimeric receptor phosphorylates tyrosine residues on the other subunit. Phosphorylation at Tyr-947 is important for interaction with SH2D2A/TSAD and VEGFA-mediated reorganization of the actin cytoskeleton. Phosphorylation at Tyr-1171 is important for interaction with PLCG1 and SHB. Phosphorylation at Tyr-1210 is important for interaction with NCK1 and FYN. Dephosphorylated by PTPRB. Dephosphorylated by PTPRJ at Tyr-797, Tyr-947, Tyr-992, Tyr-1050, Tyr-1055, Tyr-1171 and Tyr-1210. The inhibitory disulfide bond between Cys-1020 and Cys-1041 may serve as a specific molecular switch for H(2)S-induced modification that regulates KDR/VEGFR2 function. In terms of tissue distribution, expressed in the post-pubertal mammary glands.

It localises to the cell membrane. The protein localises to the cytoplasm. The protein resides in the nucleus. It is found in the cytoplasmic vesicle. Its subcellular location is the early endosome. It localises to the cell junction. The protein localises to the endoplasmic reticulum. It carries out the reaction L-tyrosyl-[protein] + ATP = O-phospho-L-tyrosyl-[protein] + ADP + H(+). Present in an inactive conformation in the absence of bound ligand. Binding of VEGFA, VEGFC or VEGFD leads to dimerization and activation by autophosphorylation on tyrosine residues. May be regulated by hydrogen sulfide (H(2)S) levels via a sensitive intracellular disulfide bond. Tyrosine-protein kinase that acts as a cell-surface receptor for VEGFA, VEGFC and VEGFD. Plays an essential role in the regulation of angiogenesis, vascular development, vascular permeability, and embryonic hematopoiesis. Promotes proliferation, survival, migration and differentiation of endothelial cells. Promotes reorganization of the actin cytoskeleton. Isoforms lacking a transmembrane domain may function as decoy receptors for VEGFA, VEGFC and/or VEGFD. Modulates FLT1 and FLT4 signaling by forming heterodimers. Binding of vascular growth factors to isoform 1 leads to the activation of several signaling cascades. Activation of PLCG1 leads to the production of the cellular signaling molecules diacylglycerol and inositol-1,4,5-trisphosphate and the activation of protein kinase C. Mediates activation of MAPK1/ERK2, MAPK3/ERK1 and the MAP kinase signaling pathway, as well as of the AKT1 signaling pathway. Mediates phosphorylation of PIK3R1, the regulatory subunit of phosphatidylinositol 3-kinase, reorganization of the actin cytoskeleton and activation of PTK2/FAK1. Required for VEGFA-mediated induction of NOS2 and NOS3, leading to the production of the signaling molecule nitric oxide (NO) by endothelial cells. Phosphorylates PLCG1. Promotes phosphorylation of FYN, NCK1, NOS3, PIK3R1, PTK2/FAK1 and SRC. This is Vascular endothelial growth factor receptor 2 from Rattus norvegicus (Rat).